The sequence spans 89 residues: Inner kinetochore subunit mhf2 (89 aa).

Belongs to the CENP-X/MHF2 family. As to quaternary structure, the MHF histone-fold complex is a heterotetramer of 2 mhf1-mhf2 heterodimers. Component of the inner kinetochore constitutive centromere-associated network (CCAN) (also known as central kinetochore Sim4 complex in fission yeast), which is composed of at least cnl2, cnp3, cnp20, fta1, fta2, fta3, fta4, fta6, fta7, mal2, mhf1, mhf2, mis6, mis15, mis17, sim4 and wip1.

It localises to the nucleus. The protein resides in the cytoplasm. In terms of biological role, component of a FANCM-MHF complex that promotes gene conversion at blocked replication forks, probably by reversal of the stalled fork. FANCM-MHF promotes non-crossover recombination. The chain is Inner kinetochore subunit mhf2 from Schizosaccharomyces pombe (strain 972 / ATCC 24843) (Fission yeast).